A 406-amino-acid polypeptide reads, in one-letter code: Calsequestrin-2 (406 aa).

Residues methionine 1 to alanine 19 form the signal peptide. Residue asparagine 335 is glycosylated (N-linked (GlcNAc...) asparagine). A disordered region spans residues valine 365 to aspartate 406. Acidic residues predominate over residues glutamate 373–aspartate 406.

Belongs to the calsequestrin family. As to expression, skeletal and heart muscle.

The protein resides in the sarcoplasmic reticulum lumen. Its function is as follows. Calsequestrin is a high-capacity, moderate affinity, calcium-binding protein and thus acts as an internal calcium store in muscle. Calcium ions are bound by clusters of acidic residues at the protein surface, especially at the interface between subunits. Can bind around 60 Ca(2+) ions. Regulates the release of lumenal Ca(2+) via the calcium release channel RYR2; this plays an important role in triggering muscle contraction. Plays a role in excitation-contraction coupling in the heart and in regulating the rate of heart beats. The chain is Calsequestrin-2 (CASQ2) from Gallus gallus (Chicken).